A 238-amino-acid polypeptide reads, in one-letter code: COMM domain-containing protein 10 homolog Vlet (238 aa).

Residues 43 to 77 show a composition bias toward low complexity; that stretch reads ASASATSSTVGTSVTTTGRVDSSTEENPTSNTEPE. Residues 43–78 form a disordered region; the sequence is ASASATSSTVGTSVTTTGRVDSSTEENPTSNTEPEY. The 65-residue stretch at 161–225 folds into the COMM domain; sequence VIEDVAWKLN…SIQGELDAML (65 aa).

It belongs to the COMM domain-containing protein 10 family. Component of the commander complex consisting of the CCC subcomplex and the retriever subcomplex. Component of the CCC subcomplex. Interacts with Smn; along with Sbat and Hez may form an accessory subcomplex involved in SMN complex function.

Scaffold protein in the commander complex that is essential for endosomal recycling of transmembrane cargos; the commander complex is composed of the CCC subcomplex and the retriever subcomplex. May modulate activity of cullin-RING E3 ubiquitin ligase (CRL) complexes. May down-regulate activation of NF-kappa-B. May have an accessory function in the survival motor neuron (SMN) complex. Required for neuromuscular function and organismal viability. The polypeptide is COMM domain-containing protein 10 homolog Vlet (Drosophila melanogaster (Fruit fly)).